The following is a 375-amino-acid chain: Tyrosine--tRNA ligase (375 aa).

L-tyrosine contacts are provided by Tyr-37, Tyr-168, Gln-172, Asp-175, and Gln-190. A 'KMSKS' region motif is present at residues 251–255; it reads KMSKS. Lys-254 contributes to the ATP binding site.

Belongs to the class-I aminoacyl-tRNA synthetase family. TyrS type 4 subfamily. In terms of assembly, homodimer.

The protein resides in the cytoplasm. It catalyses the reaction tRNA(Tyr) + L-tyrosine + ATP = L-tyrosyl-tRNA(Tyr) + AMP + diphosphate + H(+). Its function is as follows. Catalyzes the attachment of tyrosine to tRNA(Tyr) in a two-step reaction: tyrosine is first activated by ATP to form Tyr-AMP and then transferred to the acceptor end of tRNA(Tyr). The sequence is that of Tyrosine--tRNA ligase from Thermococcus onnurineus (strain NA1).